The primary structure comprises 341 residues: Phosphate acyltransferase (341 aa).

Belongs to the PlsX family. As to quaternary structure, homodimer. Probably interacts with PlsY.

It is found in the cytoplasm. The enzyme catalyses a fatty acyl-[ACP] + phosphate = an acyl phosphate + holo-[ACP]. Its pathway is lipid metabolism; phospholipid metabolism. In terms of biological role, catalyzes the reversible formation of acyl-phosphate (acyl-PO(4)) from acyl-[acyl-carrier-protein] (acyl-ACP). This enzyme utilizes acyl-ACP as fatty acyl donor, but not acyl-CoA. In Vibrio campbellii (strain ATCC BAA-1116), this protein is Phosphate acyltransferase.